We begin with the raw amino-acid sequence, 25 residues long: Gastrin-releasing peptide (25 aa).

Residue Met-25 is modified to Methionine amide.

This sequence belongs to the bombesin/neuromedin-B/ranatensin family.

Its subcellular location is the secreted. It is found in the cytoplasmic vesicle. The protein localises to the secretory vesicle lumen. Stimulates the release of gastrin and other gastrointestinal hormones. The protein is Gastrin-releasing peptide (grp) of Scyliorhinus canicula (Small-spotted catshark).